We begin with the raw amino-acid sequence, 104 residues long: Zinc-containing ferredoxin-1 (104 aa).

The interval 2-37 (GIDPNYRTNRQVVGEHSGHKVYGPVEPPKVLGIHGT) is N-terminal extension. Residues His17 and His20 each coordinate Zn(2+). Position 30 is an N6-methyllysine (Lys30). His35 is a binding site for Zn(2+). 4Fe-4S ferredoxin-type domains follow at residues 38–66 (IVGVDFDLCIADGSCINACPVNVFQWYDT) and 75–104 (KADPVNEQACIFCMACVNVCPVAAIDVKPP). Residues Cys46 and Cys52 each contribute to the [3Fe-4S] cluster site. Residue Cys56 coordinates [4Fe-4S] cluster. Asp77 contacts Zn(2+). [4Fe-4S] cluster-binding residues include Cys84, Cys87, and Cys90. Cys94 lines the [3Fe-4S] cluster pocket.

It depends on [3Fe-4S] cluster as a cofactor. The cofactor is [4Fe-4S] cluster. Zn(2+) is required as a cofactor.

Functionally, ferredoxins are iron-sulfur proteins that transfer electrons in a wide variety of metabolic reactions. The sequence is that of Zinc-containing ferredoxin-1 (zfx1) from Sulfurisphaera tokodaii (strain DSM 16993 / JCM 10545 / NBRC 100140 / 7) (Sulfolobus tokodaii).